Here is a 264-residue protein sequence, read N- to C-terminus: 1-(5-phosphoribosyl)-5-[(5-phosphoribosylamino)methylideneamino] imidazole-4-carboxamide isomerase (264 aa).

Belongs to the HisA/HisF family.

It localises to the cytoplasm. The catalysed reaction is 1-(5-phospho-beta-D-ribosyl)-5-[(5-phospho-beta-D-ribosylamino)methylideneamino]imidazole-4-carboxamide = 5-[(5-phospho-1-deoxy-D-ribulos-1-ylimino)methylamino]-1-(5-phospho-beta-D-ribosyl)imidazole-4-carboxamide. It functions in the pathway amino-acid biosynthesis; L-histidine biosynthesis; L-histidine from 5-phospho-alpha-D-ribose 1-diphosphate: step 4/9. The sequence is that of 1-(5-phosphoribosyl)-5-[(5-phosphoribosylamino)methylideneamino] imidazole-4-carboxamide isomerase (HIS6) from Yarrowia lipolytica (strain CLIB 122 / E 150) (Yeast).